The chain runs to 100 residues: Urease subunit gamma (100 aa).

It belongs to the urease gamma subunit family. As to quaternary structure, heterotrimer of UreA (gamma), UreB (beta) and UreC (alpha) subunits. Three heterotrimers associate to form the active enzyme.

The protein localises to the cytoplasm. It carries out the reaction urea + 2 H2O + H(+) = hydrogencarbonate + 2 NH4(+). It functions in the pathway nitrogen metabolism; urea degradation; CO(2) and NH(3) from urea (urease route): step 1/1. This is Urease subunit gamma from Rhizobium rhizogenes (strain K84 / ATCC BAA-868) (Agrobacterium radiobacter).